Reading from the N-terminus, the 328-residue chain is MSIFSRIAGTGSYLPELRLTNQDLVERLAKTGLETSDEWIATRSGISARHFAAENELTSDLALKAAQAALSSAGITSSDLDLIILATSTPDHLGGFPSTACVVQDKLGAHTACAAFDVQAVCAGFTYALATADAFIRTGSYKKVLVIGAETFSRILDFQDRGTCVLFGDGAGAVVLEASSEPGILSTALHADGSQRDILCVPGRSGNGAVHGSPFMTMDGQAVFKLAVKVLEQVAHEVLAKANLKPEQIDWLVPHQANIRIMEGTAKKMGMSMDKVIVTVHEHGNTSAASIPLALDCGIRSGQIQRGQHLLLEGVGGGFAWGAVALKY.

Residues Cys122 and His255 contribute to the active site. The tract at residues 256–260 (QANIR) is ACP-binding. Residue Asn285 is part of the active site.

The protein belongs to the thiolase-like superfamily. FabH family. Homodimer.

Its subcellular location is the cytoplasm. It carries out the reaction malonyl-[ACP] + acetyl-CoA + H(+) = 3-oxobutanoyl-[ACP] + CO2 + CoA. Its pathway is lipid metabolism; fatty acid biosynthesis. In terms of biological role, catalyzes the condensation reaction of fatty acid synthesis by the addition to an acyl acceptor of two carbons from malonyl-ACP. Catalyzes the first condensation reaction which initiates fatty acid synthesis and may therefore play a role in governing the total rate of fatty acid production. Possesses both acetoacetyl-ACP synthase and acetyl transacylase activities. Its substrate specificity determines the biosynthesis of branched-chain and/or straight-chain of fatty acids. The sequence is that of Beta-ketoacyl-[acyl-carrier-protein] synthase III from Polynucleobacter asymbioticus (strain DSM 18221 / CIP 109841 / QLW-P1DMWA-1) (Polynucleobacter necessarius subsp. asymbioticus).